The chain runs to 470 residues: 3-isopropylmalate dehydratase large subunit (470 aa).

The [4Fe-4S] cluster site is built by C346, C406, and C409.

This sequence belongs to the aconitase/IPM isomerase family. LeuC type 1 subfamily. As to quaternary structure, heterodimer of LeuC and LeuD. The cofactor is [4Fe-4S] cluster.

The enzyme catalyses (2R,3S)-3-isopropylmalate = (2S)-2-isopropylmalate. Its pathway is amino-acid biosynthesis; L-leucine biosynthesis; L-leucine from 3-methyl-2-oxobutanoate: step 2/4. In terms of biological role, catalyzes the isomerization between 2-isopropylmalate and 3-isopropylmalate, via the formation of 2-isopropylmaleate. The polypeptide is 3-isopropylmalate dehydratase large subunit (Shouchella clausii (strain KSM-K16) (Alkalihalobacillus clausii)).